The following is an 829-amino-acid chain: GLKEPVQPQVSCRYRCNETFSRMASGCSCDDKCTERQACCSDYEDTCVLPTQSWSCSKLRCGEKRIANVLCSCSEDCLEKKDCCTDYKTICKGETSWLKDKCASSGATQCPAGFEQSPLILFSMDGFRAGYLENWDSLMPNINKLKTCGTHAKYMRAVYPTKTFVNHYTIATGLYPESHGIIDNNIYDVNLNLNFSLSSSTARNPAWWGGQPIWHTATYQGLKAATYFWPGSEVKINGSYPTIFKNYDKSIPFEARVTEVLKWLDLPKAKRPDFFTLYIEEPDTTGHKYGPVSGEIIKALQMADRTLGMLMEGLKQRNLHNCVNLILLADHGMEEISCDRLEYMANYFDNVDFFMYEGPAPRIRSKNVPKDFYTFDSEGIVKNLTCRKPKQYFKAYLSKDLPKRLHYANNIRIDKVNLMVDQQWMAVRDKKFTRCKGGTHGYDNEFKSMQAIFLAHGPGFNEKNEVTSFENIEVYNLMCDLLKLKPAPNDGTHGSLNHLLKNPFYTPSPAKEQSSPLSCPFGPVPSPDVSGCKCSSITELEKVNQRLNLNNQAKTESEAHNLPYGRPQVLQNHSKYCLLHQAKYISAYSQDILMPLWSSYTIYRSTSTSVPPSASDCLRLDVRIPAAQSQTCSNYQPDLTITPGFLYPPNFNSSNFEQYDALITSNIVPMFKGFTRLWNYFHTTLIPKYARERDGLNVISGPIFDYNYDGHFDSYDTIKQHVSNTKIPIPTHYFVVLTSCENQINTPLNCLGPLKVLSFILPHRPDNSESCADTSPENLWVEERIQIHTARVRDVELLTGLNFYSGLKQPLPETLQLKTFLPIFVNPVN.

SMB domains follow at residues 8-51 (PQVS…VLPT) and 52-96 (QSWS…GETS). 16 disulfide bridges follow: Cys12–Cys16, Cys12–Cys29, Cys16–Cys47, Cys27–Cys29, Cys27–Cys40, Cys33–Cys39, Cys40–Cys47, Cys56–Cys61, Cys56–Cys73, Cys61–Cys91, Cys71–Cys73, Cys71–Cys84, Cys77–Cys83, Cys84–Cys91, Cys102–Cys148, and Cys110–Cys322. A glycan (N-linked (GlcNAc...) asparagine) is linked at Asn17. The short motif at 36-38 (RQA) is the Cell attachment site element. A divalent metal cation-binding residues include Asp125 and Thr163. Thr163 serves as the catalytic AMP-threonine intermediate. Asn194 and Asn237 each carry an N-linked (GlcNAc...) asparagine glycan. Residue Lys249 participates in AMP binding. A divalent metal cation contacts are provided by Asp283, His287, Asp330, and His331. An AMP-binding site is contributed by His287. Disulfide bonds link Cys338-Cys435, Cys386-Cys771, Cys519-Cys577, Cys532-Cys632, Cys534-Cys617, and Cys740-Cys750. Residue Asn383 is glycosylated (N-linked (GlcNAc...) asparagine). His440 serves as a coordination point for a divalent metal cation. N-linked (GlcNAc...) asparagine glycans are attached at residues Asn572 and Asn652.

The protein belongs to the nucleotide pyrophosphatase/phosphodiesterase family. Monomer. The cofactor is a divalent metal cation. Post-translationally, N-glycosylated. Glycosylation counts for an increased mass of ~9%. Contains 16 disulfide bonds. In terms of tissue distribution, expressed by venom gland.

The protein localises to the secreted. The enzyme catalyses ADP + H2O = AMP + phosphate + H(+). Hydrolyzes ADP with high activity. Shows weak or no activity on 5'-AMP, 5'-GMP, 3'-AMP, ATP, cAMP, and cGMP. Is devoid of monophosphatase and proteinase activities. Inhibits ADP-induced platelet aggregation and is cytotoxic to human keratinocytes. Kinetic parameters indicated a higher affinity for the substrate bis(p-nitrophenyl) phosphate compared to others snake venom PDEs. Is recognized by the crotalid antivenom produced by the Instituto Butantan. The protein is Venom phosphodiesterase CdcPDE of Crotalus durissus collilineatus (Brazilian rattlesnake).